The sequence spans 181 residues: UPF0177 protein YbdI (181 aa).

Transmembrane regions (helical) follow at residues 10–30, 41–61, 81–101, 114–134, and 161–181; these read ILFL…GVFA, LLWL…AHYL, FVDS…IAPI, FFSH…LIHT, and SDSI…HIII.

This sequence belongs to the UPF0177 family.

Its subcellular location is the cell membrane. The polypeptide is UPF0177 protein YbdI (ybdI) (Lactococcus lactis subsp. lactis (strain IL1403) (Streptococcus lactis)).